A 476-amino-acid chain; its full sequence is Hydrogenase-4 component F homolog (476 aa).

12 helical membrane passes run Met1–Ser21, Ile25–Leu45, Phe54–Thr74, Ile120–Ile140, Tyr153–Ile173, Leu202–Pro222, Pro235–Leu255, Ala270–Tyr290, Met307–Leu327, Leu368–Phe388, Ser402–Leu422, and Leu442–Pro462.

It belongs to the complex I subunit 5 family.

Its subcellular location is the cell inner membrane. The protein is Hydrogenase-4 component F homolog (hyfF) of Methylacidiphilum infernorum (isolate V4) (Methylokorus infernorum (strain V4)).